We begin with the raw amino-acid sequence, 740 residues long: Cell death abnormality protein 12 (740 aa).

The ELMO domain occupies 348–494; that stretch reads SEIQKVLDID…FVLEQLRHVL (147 aa). The interval 555 to 690 is required for punctate localization, cell corpse engulfment and distal cell tip migration; that stretch reads INHLNYLKKG…ESLAYLVGNT (136 aa). The SH3-binding motif lies at 724–727; it reads PDVP.

As to quaternary structure, interacts with psr-1. Forms a ternary complex with ced-2 and ced-5.

It is found in the cytoplasm. Involved in apoptosis and necrosis. Required for the cell corpse engulfment process. Has roles in the formation of actin halos and distal tip cell migration. Plays no role in amphid axon outgrowth. The protein is Cell death abnormality protein 12 of Caenorhabditis briggsae.